Consider the following 90-residue polypeptide: DNA-binding protein HU (90 aa).

It belongs to the bacterial histone-like protein family. As to quaternary structure, homodimer.

Functionally, histone-like DNA-binding protein which is capable of wrapping DNA to stabilize it, and thus to prevent its denaturation under extreme environmental conditions. The protein is DNA-binding protein HU (hup) of Haemophilus influenzae (strain ATCC 51907 / DSM 11121 / KW20 / Rd).